The primary structure comprises 250 residues: 7-carboxy-7-deazaguanine synthase (250 aa).

Substrate-binding positions include 15 to 17 (VQG) and R30. The Radical SAM core domain occupies 21–250 (LIGLRQVFIR…PQTHRFMGQL (230 aa)). [4Fe-4S] cluster contacts are provided by C34, C38, and C41. A Mg(2+)-binding site is contributed by T43. T96 serves as a coordination point for substrate. G98 is an S-adenosyl-L-methionine binding site.

Belongs to the radical SAM superfamily. 7-carboxy-7-deazaguanine synthase family. As to quaternary structure, homodimer. The cofactor is [4Fe-4S] cluster. It depends on S-adenosyl-L-methionine as a cofactor. Requires Mg(2+) as cofactor.

The catalysed reaction is 6-carboxy-5,6,7,8-tetrahydropterin + H(+) = 7-carboxy-7-deazaguanine + NH4(+). The protein operates within purine metabolism; 7-cyano-7-deazaguanine biosynthesis. In terms of biological role, catalyzes the complex heterocyclic radical-mediated conversion of 6-carboxy-5,6,7,8-tetrahydropterin (CPH4) to 7-carboxy-7-deazaguanine (CDG), a step common to the biosynthetic pathways of all 7-deazapurine-containing compounds. This chain is 7-carboxy-7-deazaguanine synthase, found in Geobacter sulfurreducens (strain ATCC 51573 / DSM 12127 / PCA).